We begin with the raw amino-acid sequence, 119 residues long: Large ribosomal subunit protein uL18 (119 aa).

This sequence belongs to the universal ribosomal protein uL18 family. Part of the 50S ribosomal subunit; part of the 5S rRNA/L5/L18/L25 subcomplex. Contacts the 5S and 23S rRNAs.

Functionally, this is one of the proteins that bind and probably mediate the attachment of the 5S RNA into the large ribosomal subunit, where it forms part of the central protuberance. The polypeptide is Large ribosomal subunit protein uL18 (Xylella fastidiosa (strain M23)).